The chain runs to 415 residues: Peptide chain release factor subunit 1 (415 aa).

This sequence belongs to the eukaryotic release factor 1 family. As to quaternary structure, heterodimer of two subunits, one of which binds GTP.

It localises to the cytoplasm. Functionally, directs the termination of nascent peptide synthesis (translation) in response to the termination codons UAA, UAG and UGA. The sequence is that of Peptide chain release factor subunit 1 from Thermococcus sibiricus (strain DSM 12597 / MM 739).